Here is a 900-residue protein sequence, read N- to C-terminus: Minor teichoic acid biosynthesis protein GgaB (900 aa).

The protein belongs to the glycosyltransferase 2 family.

It participates in cell wall biogenesis; poly(glucopyranosyl N-acetylgalactosamine 1-phosphate) teichoic acid biosynthesis. In terms of biological role, involved in the biosynthesis of galactosamine-containing minor teichoic acid, a non-essential cell wall polymer in B.subtilis 168. The protein is Minor teichoic acid biosynthesis protein GgaB (ggaB) of Bacillus subtilis (strain 168).